Reading from the N-terminus, the 579-residue chain is Thiol:disulfide interchange protein DsbD (579 aa).

Positions 1–16 (MKKLFLFFTLIFTAFA) are cleaved as a signal peptide. Disulfide bonds link Cys-124–Cys-129 and Cys-193–Cys-315. 8 consecutive transmembrane segments (helical) span residues 178-198 (IFGF…LPML), 230-250 (LTYT…QIAL), 254-274 (YVMI…FGLF), 296-316 (GAFG…SPCT), 337-357 (AATL…ITLF), 376-396 (FGFV…PEVW), 397-417 (EPRL…LQMS), and 420-440 (GFGY…VQPL). The region spanning 449 to 579 (TTTQSAVENK…AFSNWLKALH (131 aa)) is the Thioredoxin domain. Cysteines 495 and 498 form a disulfide.

It belongs to the thioredoxin family. DsbD subfamily.

Its subcellular location is the cell inner membrane. The catalysed reaction is [protein]-dithiol + NAD(+) = [protein]-disulfide + NADH + H(+). It carries out the reaction [protein]-dithiol + NADP(+) = [protein]-disulfide + NADPH + H(+). In terms of biological role, required to facilitate the formation of correct disulfide bonds in some periplasmic proteins and for the assembly of the periplasmic c-type cytochromes. Acts by transferring electrons from cytoplasmic thioredoxin to the periplasm. This transfer involves a cascade of disulfide bond formation and reduction steps. The polypeptide is Thiol:disulfide interchange protein DsbD (Haemophilus influenzae (strain PittEE)).